Reading from the N-terminus, the 372-residue chain is E3 ubiquitin-protein ligase RNF34 (372 aa).

The FYVE-type zinc finger occupies 56–107 (EGPNIVCKACGLSFSVFRKKHVCCDCKKDFCSVCSVLQENLRRCSTCHLLQE). An SAP 1 domain is found at 115–134 (LMRLKVKDLRQYLILRNIPI). A Phosphoserine modification is found at Ser169. The interval 194-253 (QGELMDGDQTSRSGVPAQVQSEITSANTEDDDDDDDEDDDDEEENAEDRNPGLSKERVRA) is disordered. The segment covering 201–220 (DQTSRSGVPAQVQSEITSAN) has biased composition (polar residues). A compositionally biased stretch (acidic residues) spans 221 to 239 (TEDDDDDDDEDDDDEEENA). Residues 240–252 (EDRNPGLSKERVR) are compositionally biased toward basic and acidic residues. Ser254 and Ser256 each carry phosphoserine. Residues 264–278 (VEGMSVRQLKEILAR) form the SAP 2 domain. Residues 325–360 (CRICMDAVIDCVLLECGHMVTCTKCGKRMSECPICR) form an RING-type zinc finger.

In terms of assembly, interacts with CASP8 and CASP10. Interacts (via RING-type zinc finger) with PPARGC1A. Interacts with NOD1. Interacts with p53/TP53; involved in p53/TP53 ubiquitination. Interacts (via RING-type zinc finger) with MDM2; the interaction stabilizes MDM2. Post-translationally, autoubiquitinated (in vitro). In terms of processing, proteolytically cleaved by caspases upon induction of apoptosis by TNF. In terms of tissue distribution, ubiquitous. Detected in heart, brain, liver, skeletal muscle, kidney, pancreas, spleen, thymus, prostate, testis, ovary, colon and leukocytes.

The protein resides in the cell membrane. The protein localises to the endomembrane system. It is found in the nucleus. It localises to the nucleus speckle. Its subcellular location is the cytoplasm. The protein resides in the cytosol. The enzyme catalyses S-ubiquitinyl-[E2 ubiquitin-conjugating enzyme]-L-cysteine + [acceptor protein]-L-lysine = [E2 ubiquitin-conjugating enzyme]-L-cysteine + N(6)-ubiquitinyl-[acceptor protein]-L-lysine.. It participates in protein modification; protein ubiquitination. E3 ubiquitin-protein ligase that regulates several biological processes through the ubiquitin-mediated proteasomal degradation of various target proteins. Ubiquitinates the caspases CASP8 and CASP10, promoting their proteasomal degradation, to negatively regulate cell death downstream of death domain receptors in the extrinsic pathway of apoptosis. May mediate 'Lys-48'-linked polyubiquitination of RIPK1 and its subsequent proteasomal degradation thereby indirectly regulating the tumor necrosis factor-mediated signaling pathway. Negatively regulates p53/TP53 through its direct ubiquitination and targeting to proteasomal degradation. Indirectly, may also negatively regulate p53/TP53 through ubiquitination and degradation of SFN. Mediates PPARGC1A proteasomal degradation probably through ubiquitination thereby indirectly regulating the metabolism of brown fat cells. Possibly involved in innate immunity, through 'Lys-48'-linked polyubiquitination of NOD1 and its subsequent proteasomal degradation. This Homo sapiens (Human) protein is E3 ubiquitin-protein ligase RNF34.